Here is a 318-residue protein sequence, read N- to C-terminus: TPR repeat-containing protein MJ0940 (318 aa).

8 TPR repeats span residues 17–50 (SLTYLIKSYEYRDRGNLLESLYYLDKALELNPDF), 84–117 (PVAYALLGQLYELLGNFDNALECYEKSLGIEEKF), 119–151 (TAFFLKVLCLGLSGKYDELLKCCDRLISFAPNF), 152–185 (IPAYIIKANMLRKLGRYEEALACVNKVLELKEND), 186–219 (TNAIYLKALILNRIGNCDEALKYYEKLIDELNVT), 221–254 (IEVIREAIYLSFLFNKLDKAEKYIEMGLKLRPDD), 255–288 (ASLWYFKGKLYEKQNKFEEALKYYNKAIQLMPHH), and 289–318 (TKALLAKARVLEKLGRIEESIECYNKALDR).

This is TPR repeat-containing protein MJ0940 from Methanocaldococcus jannaschii (strain ATCC 43067 / DSM 2661 / JAL-1 / JCM 10045 / NBRC 100440) (Methanococcus jannaschii).